Reading from the N-terminus, the 448-residue chain is Beclin-1 (448 aa).

The residue at position 1 (M1) is an N-acetylmethionine. Phosphoserine is present on residues S14 and S29. The disordered stretch occupies residues 47-72 (TTAQAKPGESQEEEANSGEEPFIETR). 3 positions are modified to phosphoserine; by AMPK: S88, S91, and S94. The BH3 motif lies at 106–125 (TMENLSRRLKVTGDLFDIMS). Residues 110-157 (LSRRLKVTGDLFDIMSGQTDVDHPLCEECTDTLLDQLDTQLNVTENEC) are interaction with BCL2 and BCL2L1 isoform Bcl-X(L). At T117 the chain carries Phosphothreonine; by DAPK1. The stretch at 140-267 (DTLLDQLDTQ…QLDKLKKTNV (128 aa)) forms a coiled coil. An evolutionary conserved domain (ECD) region spans residues 243–448 (DELKSVENQM…AWVSSQFYNK (206 aa)). Glycyl lysine isopeptide (Lys-Gly) (interchain with G-Cter in ubiquitin) cross-links involve residues K400 and K435. The interval 423-448 (WTKALKFMLTNLKWGLAWVSSQFYNK) is required for membrane-association.

Belongs to the beclin family. A homodimeric form is proposed to exist; this metastable form readily transits to ATG14- or UVRAG-containing complexes with BECN1:UVRAG being more stable than BECN1:ATG14. Component of the PI3K (PI3KC3/PI3K-III/class III phosphatidylinositol 3-kinase) complex the core of which is composed of the catalytic subunit PIK3C3, the regulatory subunit PIK3R4 and BECN1 associating with additional regulatory/auxiliary subunits to form alternative complex forms. Alternative complex forms containing a fourth regulatory subunit in a mutually exclusive manner are PI3K complex I (PI3KC3-C1) containing ATG14, and PI3K complex II (PI3KC3-C2) containing UVRAG. PI3KC3-C1 displays a V-shaped architecture with PIK3R4 serving as a bridge between PIK3C3 and the ATG14:BECN1 subcomplex. Both, PI3KC3-C1 and PI3KC3-C2, can associate with further regulatory subunits, such as RUBCN, SH3GLB1/Bif-1 and AMBRA1. PI3KC3-C1 probably associates with PIK3CB. Forms a complex with PPP2CA and AMBRA1; AMBRA1 and BECN1 components of the complex regulate MYC stability via different pathways. Component of the complex, at least composed of LRPPRC, BECN1 and BCL2; the interactions prevent BECN1 from forming an autophagy-inducing complex with PIK3C3. Interacts with AMBRA1, GOPC, GRID2. Interacts with BCL2 and BCL2L1 isoform Bcl-X(L); the interaction inhibits BECN1 function in promoting autophagy by interfering with the formation of the PI3K complex. Interacts with cytosolic HMGB1; inhibits the interaction of BECN1 and BCL2 leading to promotion of autophagy. Interacts with USP10, USP13, DAPK1, RAB39A. Interacts with SLAMF1. Interacts with the poly-Gln domain of ATXN3; the interaction causes deubiquitination at Lys-400 and stabilizes BECN1. Interacts with VMP1. Interacts with TRIM5; the interaction causes activation of BECN1 by causing its dissociation from its inhibitors BCL2 and TAB2. Interacts with active ULK1 (phosphorylated on 'Ser-317') and MEFV simultaneously. Interacts with WDR81 and WDR91; negatively regulates the PI3 kinase/PI3K activity associated with endosomal membranes. Interacts with LAPTM4B; competes with EGFR for LAPTM4B binding; regulates EGFR activity. Interacts with TRIM50. Interacts with TRIM16. Interacts with ATG14; this interaction is increased in the absence of TMEM39A. Interacts with WASHC1; preventing interaction with AMBRA1 and the DCX(AMBRA1) complex and subsequent ubiquitination. Interacts with TRIM17. Interacts with BCL2L10/BCL-B (via BH1 domain). Interacts with SH3BGRL. Interacts with IRGM; enhancing BECN1-interacting partners and influencing the composition of the BECN1 complex. Interacts with ARMC3. Interacts with LRPPRC. Phosphorylation at Thr-117 by DAPK1 reduces its interaction with BCL2 and BCL2L1 and promotes induction of autophagy. In response to autophagic stimuli, phosphorylated at serine residues by AMPK in an ATG14-dependent manner, and this phosphorylation is critical for maximally efficient autophagy. In terms of processing, polyubiquitinated by NEDD4, both with 'Lys-11'- and 'Lys-63'-linkages. 'Lys-11'-linked polyubiquitination leads to degradation and is enhanced when the stabilizing interaction partner VPS34 is depleted. Deubiquitinated by USP10 and USP13, leading to stabilize the PIK3C3/VPS34-containing complexes. Polyubiquitinated at Lys-400 with 'Lys-48'-linkages. 'Lys-48'-linked polyubiquitination of Lys-400 leads to degradation. Deubiquitinated by ATXN3, leading to stabilization. Ubiquitinated at Lys-435 via 'Lys-63'-linkage by the DCX(AMBRA1) complex, thereby increasing the association between BECN1 and PIK3C3 to promote PIK3C3 activity. 'Lys-48'-linked ubiquitination by RNF216 leads to proteasomal degradation and autophagy inhibition. Post-translationally, proteolytically processed by caspases including CASP8 and CASP3; the C-terminal fragments lack autophagy-inducing capacity and are proposed to induce apoptosis. Thus the cleavage is proposed to be an determinant to switch from autophagy to apoptosis pathways affecting cellular homeostasis including viral infections and survival of tumor cells.

The protein localises to the cytoplasm. The protein resides in the golgi apparatus. It localises to the trans-Golgi network membrane. Its subcellular location is the endosome membrane. It is found in the endoplasmic reticulum membrane. The protein localises to the mitochondrion membrane. The protein resides in the cytoplasmic vesicle. It localises to the autophagosome. Its subcellular location is the mitochondrion. It is found in the nucleus. Plays a central role in autophagy. Acts as a core subunit of the PI3K complex that mediates formation of phosphatidylinositol 3-phosphate; different complex forms are believed to play a role in multiple membrane trafficking pathways: PI3KC3-C1 is involved in initiation of autophagosomes and PI3KC3-C2 in maturation of autophagosomes and endocytosis. Involved in regulation of degradative endocytic trafficking and required for the abscission step in cytokinesis, probably in the context of PI3KC3-C2. Essential for the formation of PI3KC3-C2 but not PI3KC3-C1 PI3K complex forms. Involved in endocytosis. May play a role in antiviral host defense. Functionally, beclin-1-C 35 kDa localized to mitochondria can promote apoptosis; it induces the mitochondrial translocation of BAX and the release of proapoptotic factors. In Rattus norvegicus (Rat), this protein is Beclin-1 (Becn1).